The chain runs to 209 residues: Ribosomal RNA large subunit methyltransferase E (209 aa).

S-adenosyl-L-methionine is bound by residues glycine 63, tryptophan 65, aspartate 83, aspartate 99, and aspartate 124. Catalysis depends on lysine 164, which acts as the Proton acceptor.

The protein belongs to the class I-like SAM-binding methyltransferase superfamily. RNA methyltransferase RlmE family.

Its subcellular location is the cytoplasm. The catalysed reaction is uridine(2552) in 23S rRNA + S-adenosyl-L-methionine = 2'-O-methyluridine(2552) in 23S rRNA + S-adenosyl-L-homocysteine + H(+). Its function is as follows. Specifically methylates the uridine in position 2552 of 23S rRNA at the 2'-O position of the ribose in the fully assembled 50S ribosomal subunit. In Vibrio parahaemolyticus serotype O3:K6 (strain RIMD 2210633), this protein is Ribosomal RNA large subunit methyltransferase E.